Consider the following 354-residue polypeptide: MDGNKGPVVVTGASGFVGSWLVMKLLQAGYTVRATVRDPANVEKTKPLLELPGAKERLSIWKADLSEDGSFNEAIAGCTGVFHVATPMDFDSQDPENEVIKPTVEGMLSIMRACKEAGTVKRIVFTSSAGSVNIEERPRPAYDQDNWSDIDYCRRVKMTGWMYFVSKALAEKAAMEYASENGLDFISIIPTLVVGPFLSAGMPPSLVTALALITGNEAHYSILKQVQLVHLDDLCDAMTFLFEHPEANGRYICSSHDATIHGLARMLQDRFPEYDIPQKFAGVDDNLQPIHFSSKKLLDHGFSFRYTTEDMFDAAIHTCRDKGLIPLGDVPAPAAGGKLGALAAGEGQAIGAET.

NADP(+) contacts are provided by Lys-44 and Tyr-163.

Belongs to the NAD(P)-dependent epimerase/dehydratase family. Dihydroflavonol-4-reductase subfamily.

It catalyses the reaction a (2R,3S,4S)-leucoanthocyanidin + NADP(+) = a (2R,3R)-dihydroflavonol + NADPH + H(+). The catalysed reaction is (2S)-flavan-4-ol + NADP(+) = (2S)-flavanone + NADPH + H(+). It functions in the pathway pigment biosynthesis; anthocyanin biosynthesis. In terms of biological role, bifunctional enzyme involved in flavonoid metabolism. The chain is Dihydroflavonol 4-reductase (ANT18) from Hordeum vulgare (Barley).